Consider the following 306-residue polypeptide: MNLKQEKIAVLLGGTSAEREVSFNSGRAVLEALLKQGYNAHPIDPKEYNVANLKKDGFNRAFNILHGRGGEDGTMQGLLEQIGLPYTGCGVMASALTMDKMRTKMLWKAFGLPVADMKVVTRETFSELDPQAVVAKLGLPLMVKPSLEGSSVGLTKVKAVEELKSAVEYALKFDNTILIEEWLAGDELTVPVLDNQVLPAIRIVPEGEFYDYEAKYISDNTQYFCPAGLTPEREQELAILVKRAYDAVGCRGWSRIDVMCDAKGNFRLVEVNTNPGMTSHSLFPKSAATVGISFEQLVVKILELSL.

An ATP-grasp domain is found at K104–E303. V134–T189 contacts ATP. Residues D257, E270, and N272 each contribute to the Mg(2+) site.

This sequence belongs to the D-alanine--D-alanine ligase family. Requires Mg(2+) as cofactor. The cofactor is Mn(2+).

It is found in the cytoplasm. The catalysed reaction is 2 D-alanine + ATP = D-alanyl-D-alanine + ADP + phosphate + H(+). It functions in the pathway cell wall biogenesis; peptidoglycan biosynthesis. In terms of biological role, cell wall formation. The sequence is that of D-alanine--D-alanine ligase from Haemophilus influenzae (strain PittGG).